The primary structure comprises 842 residues: Alanine--tRNA ligase (842 aa).

Positions 549, 553, 650, and 654 each coordinate Zn(2+).

The protein belongs to the class-II aminoacyl-tRNA synthetase family. Zn(2+) serves as cofactor.

Its subcellular location is the cytoplasm. It catalyses the reaction tRNA(Ala) + L-alanine + ATP = L-alanyl-tRNA(Ala) + AMP + diphosphate. Catalyzes the attachment of alanine to tRNA(Ala) in a two-step reaction: alanine is first activated by ATP to form Ala-AMP and then transferred to the acceptor end of tRNA(Ala). Also edits incorrectly charged Ser-tRNA(Ala) and Gly-tRNA(Ala) via its editing domain. This Campylobacter jejuni subsp. jejuni serotype O:6 (strain 81116 / NCTC 11828) protein is Alanine--tRNA ligase.